Consider the following 86-residue polypeptide: Anti-adapter protein IraP (86 aa).

Residues 1 to 36 are a coiled coil; it reads MKNLIAELLLKLAQKEEESKELVAQVEALEIIVTAM.

The protein belongs to the IraP family. In terms of assembly, interacts with RssB.

It localises to the cytoplasm. Inhibits RpoS proteolysis by regulating RssB activity, thereby increasing the stability of the sigma stress factor RpoS especially during phosphate and magnesium starvation, but also in stationary phase and during nitrogen starvation. Its effect on RpoS stability is due to its interaction with RssB, which probably blocks the interaction of RssB with RpoS, and the consequent delivery of the RssB-RpoS complex to the ClpXP protein degradation pathway. In Salmonella choleraesuis (strain SC-B67), this protein is Anti-adapter protein IraP.